The chain runs to 352 residues: Photosystem II D2 protein (352 aa).

Thr2 carries the N-acetylthreonine modification. A Phosphothreonine modification is found at Thr2. Residues 40–60 form a helical membrane-spanning segment; that stretch reads TAYLALGGWLTGTTFVTSWYT. His117 contributes to the chlorophyll a binding site. Residues 124-140 form a helical membrane-spanning segment; sequence GFMLRQFEIARSVKLRP. Residues Gln129 and Asn142 each contribute to the pheophytin a site. The helical transmembrane segment at 152–165 threads the bilayer; sequence VFVSVFLIYPLGQS. Residue His197 coordinates chlorophyll a. The helical transmembrane segment at 207-227 threads the bilayer; that stretch reads AALLCAIHGATVENTLFEDGD. A plastoquinone-binding residues include His214 and Phe261. Residue His214 participates in Fe cation binding. His268 is a Fe cation binding site. A helical transmembrane segment spans residues 278 to 294; it reads GLWMSALGVVGLALNLR.

The protein belongs to the reaction center PufL/M/PsbA/D family. In terms of assembly, PSII is composed of 1 copy each of membrane proteins PsbA, PsbB, PsbC, PsbD, PsbE, PsbF, PsbH, PsbI, PsbJ, PsbK, PsbL, PsbM, PsbT, PsbX, PsbY, PsbZ, Psb30/Ycf12, at least 3 peripheral proteins of the oxygen-evolving complex and a large number of cofactors. It forms dimeric complexes. The D1/D2 heterodimer binds P680, chlorophylls that are the primary electron donor of PSII, and subsequent electron acceptors. It shares a non-heme iron and each subunit binds pheophytin, quinone, additional chlorophylls, carotenoids and lipids. There is also a Cl(-1) ion associated with D1 and D2, which is required for oxygen evolution. The PSII complex binds additional chlorophylls, carotenoids and specific lipids. is required as a cofactor.

It is found in the plastid. The protein localises to the chloroplast thylakoid membrane. It catalyses the reaction 2 a plastoquinone + 4 hnu + 2 H2O = 2 a plastoquinol + O2. Photosystem II (PSII) is a light-driven water:plastoquinone oxidoreductase that uses light energy to abstract electrons from H(2)O, generating O(2) and a proton gradient subsequently used for ATP formation. It consists of a core antenna complex that captures photons, and an electron transfer chain that converts photonic excitation into a charge separation. The D1/D2 (PsbA/PsbD) reaction center heterodimer binds P680, the primary electron donor of PSII as well as several subsequent electron acceptors. D2 is needed for assembly of a stable PSII complex. The chain is Photosystem II D2 protein from Pleurastrum terricola (Filamentous green alga).